A 200-amino-acid polypeptide reads, in one-letter code: NAD(P)H dehydrogenase (quinone) (200 aa).

Positions 4–191 (ILVLYHSLWG…TIARFQGRHV (188 aa)) constitute a Flavodoxin-like domain. FMN-binding positions include 10-15 (SLWGHV) and 79-81 (TRF). Residue Trp-12 coordinates NAD(+). Residue Trp-99 participates in substrate binding. Residues 114 to 120 (STATQHG) and His-135 contribute to the FMN site.

Belongs to the WrbA family. It depends on FMN as a cofactor.

It carries out the reaction a quinone + NADH + H(+) = a quinol + NAD(+). The catalysed reaction is a quinone + NADPH + H(+) = a quinol + NADP(+). The polypeptide is NAD(P)H dehydrogenase (quinone) (Acidithiobacillus ferrooxidans (strain ATCC 53993 / BNL-5-31) (Leptospirillum ferrooxidans (ATCC 53993))).